A 421-amino-acid chain; its full sequence is Serine--tRNA ligase (421 aa).

229–231 (TSE) contributes to the L-serine binding site. 260–262 (RRE) contacts ATP. An L-serine-binding site is contributed by glutamate 283. 347-350 (EISS) lines the ATP pocket. Serine 381 lines the L-serine pocket.

This sequence belongs to the class-II aminoacyl-tRNA synthetase family. Type-1 seryl-tRNA synthetase subfamily. In terms of assembly, homodimer. The tRNA molecule binds across the dimer.

It localises to the cytoplasm. It catalyses the reaction tRNA(Ser) + L-serine + ATP = L-seryl-tRNA(Ser) + AMP + diphosphate + H(+). It carries out the reaction tRNA(Sec) + L-serine + ATP = L-seryl-tRNA(Sec) + AMP + diphosphate + H(+). The protein operates within aminoacyl-tRNA biosynthesis; selenocysteinyl-tRNA(Sec) biosynthesis; L-seryl-tRNA(Sec) from L-serine and tRNA(Sec): step 1/1. Catalyzes the attachment of serine to tRNA(Ser). Is also able to aminoacylate tRNA(Sec) with serine, to form the misacylated tRNA L-seryl-tRNA(Sec), which will be further converted into selenocysteinyl-tRNA(Sec). The sequence is that of Serine--tRNA ligase from Fusobacterium nucleatum subsp. nucleatum (strain ATCC 25586 / DSM 15643 / BCRC 10681 / CIP 101130 / JCM 8532 / KCTC 2640 / LMG 13131 / VPI 4355).